The chain runs to 586 residues: Mitogen-activated protein kinase 15 (586 aa).

The Protein kinase domain maps to 14–305 (YDIKKRLGKG…AEEALEHPYV (292 aa)). ATP contacts are provided by residues 20 to 28 (LGKGAYGIV) and lysine 43. Catalysis depends on aspartate 138, which acts as the Proton acceptor. 2 disordered regions span residues 354 to 506 (QKRE…DAPP) and 520 to 539 (NQRT…RFGR). The segment covering 382–393 (PAPPAGTNPAPQ) has biased composition (pro residues). Positions 400–414 (PQRAAIAAPNQPPAQ) are enriched in low complexity. Residues 415 to 439 (KDSTQQSPKIKAPSSNPITHSTTHG) are compositionally biased toward polar residues. A compositionally biased stretch (low complexity) spans 452 to 463 (AGQQGAAGTTAQ). Residues 464-473 (EVRKEVESRS) show a composition bias toward basic and acidic residues. Residues 484 to 498 (FSHSQQARAAATNSA) show a composition bias toward polar residues.

In terms of assembly, interacts with dvl2.

It is found in the cytoplasm. Its subcellular location is the cytoskeleton. The protein resides in the cilium basal body. The protein localises to the cell projection. It localises to the cilium. It is found in the cell junction. It catalyses the reaction L-seryl-[protein] + ATP = O-phospho-L-seryl-[protein] + ADP + H(+). It carries out the reaction L-threonyl-[protein] + ATP = O-phospho-L-threonyl-[protein] + ADP + H(+). Atypical MAPK protein that regulates ciliogenesis by phosphorylating rcsd1 through its binding with dvl2. This chain is Mitogen-activated protein kinase 15, found in Xenopus laevis (African clawed frog).